Consider the following 416-residue polypeptide: UDP-N-acetylglucosamine 1-carboxyvinyltransferase (416 aa).

22–23 is a phosphoenolpyruvate binding site; that stretch reads KN. UDP-N-acetyl-alpha-D-glucosamine is bound at residue Arg92. The active-site Proton donor is the Cys116. Cys116 carries the post-translational modification 2-(S-cysteinyl)pyruvic acid O-phosphothioketal. UDP-N-acetyl-alpha-D-glucosamine-binding positions include 121–125, Asp304, and Ile326; that span reads RPVDQ.

It belongs to the EPSP synthase family. MurA subfamily.

It localises to the cytoplasm. The enzyme catalyses phosphoenolpyruvate + UDP-N-acetyl-alpha-D-glucosamine = UDP-N-acetyl-3-O-(1-carboxyvinyl)-alpha-D-glucosamine + phosphate. Its pathway is cell wall biogenesis; peptidoglycan biosynthesis. Its function is as follows. Cell wall formation. Adds enolpyruvyl to UDP-N-acetylglucosamine. This chain is UDP-N-acetylglucosamine 1-carboxyvinyltransferase, found in Janthinobacterium sp. (strain Marseille) (Minibacterium massiliensis).